The following is a 103-amino-acid chain: Cell division protein FtsB (103 aa).

At 1-3 the chain is on the cytoplasmic side; sequence MGK. A helical membrane pass occupies residues 4-21; that stretch reads LTLLLLAILVWLQYSLWF. Topologically, residues 22–103 are periplasmic; it reads GKNGIHDYTR…RAQSAGQNNR (82 aa). Positions 31-71 form a coiled coil; sequence RVNDDVAAQQATNAKLKARNDQLFAEIDDLNGGQEALEERA.

This sequence belongs to the FtsB family. As to quaternary structure, part of a complex composed of FtsB, FtsL and FtsQ.

Its subcellular location is the cell inner membrane. Its function is as follows. Essential cell division protein. May link together the upstream cell division proteins, which are predominantly cytoplasmic, with the downstream cell division proteins, which are predominantly periplasmic. This is Cell division protein FtsB from Escherichia coli O157:H7.